Consider the following 251-residue polypeptide: Cell division protein ZapD (251 aa).

It belongs to the ZapD family. As to quaternary structure, interacts with FtsZ.

It is found in the cytoplasm. In terms of biological role, cell division factor that enhances FtsZ-ring assembly. Directly interacts with FtsZ and promotes bundling of FtsZ protofilaments, with a reduction in FtsZ GTPase activity. The polypeptide is Cell division protein ZapD (Burkholderia multivorans (strain ATCC 17616 / 249)).